The following is a 194-amino-acid chain: Small ribosomal subunit protein uS7 (194 aa).

This sequence belongs to the universal ribosomal protein uS7 family. In terms of assembly, part of the 30S ribosomal subunit.

In terms of biological role, one of the primary rRNA binding proteins, it binds directly to 16S rRNA where it nucleates assembly of the head domain of the 30S subunit. Is located at the subunit interface close to the decoding center. This Methanocorpusculum labreanum (strain ATCC 43576 / DSM 4855 / Z) protein is Small ribosomal subunit protein uS7.